Reading from the N-terminus, the 652-residue chain is Spermatogenesis-associated protein 13 (652 aa).

Residues 1-24 form a disordered region; that stretch reads MTSASPEDQNAPVGCPKGARRRRP. Residue Ser78 is modified to Phosphoserine. The tract at residues 81–108 is disordered; sequence IGLDRVGRRRQMRASNVSSDGGTEPSAL. The ABR (APC-binding region) domain stretch occupies residues 98–150; it reads SSDGGTEPSALVDDNGSEEDFSYEDLCQASPRYLQPGGEQLAINELISDGNVV. A Phosphoserine modification is found at Ser114. An SH3 domain is found at 147–206; that stretch reads GNVVCAEALWDHVTMDDQELGFKAGDVIQVLEASNKDWWWGRSEDKEAWFPASFVRLRVN. The disordered stretch occupies residues 209 to 235; it reads ELSENSSSTPSEEQDEEASQSRHRHCE. One can recognise a DH domain in the interval 240-424; sequence MRTNVIREIM…KNVACLINER (185 aa). In terms of domain architecture, PH spans 455–561; that stretch reads ELIHSGELTK…WLQACADERR (107 aa). Positions 561–652 are C-terminal tail; the sequence is RRVQEDKEMG…TFNRLTPFRK (92 aa).

Interacts (via ABR and SH3 domain) with APC. The binding of APC enhances its GEF activity by relieving it from an autoinhibitory conformation, in which the ABR and SH3 domains are associated with the C-terminal tail. Interacts (via C-terminal tail) with PPP1R9B (via C-terminus). Interacts with RAC1. As to expression, expressed at high levels in the placenta, spleen and kidney, at moderate levels in lung, small intestine, liver, brain and heart, and at low levels in skeletal muscle. Expression is aberrantly enhanced in most colorectal tumors.

It localises to the cytoplasm. The protein resides in the cell projection. Its subcellular location is the filopodium. The protein localises to the lamellipodium. It is found in the ruffle membrane. It localises to the podosome. Its activity is regulated as follows. Both the ABR and the SH3 domains contribute to maintaining the protein in an inhibited conformation by associating with the C-terminal tail. Binding of these domains to the C-terminal tail inhibits the activity of the protein by blocking a region that is required for its GEF activity. Its function is as follows. Acts as a guanine nucleotide exchange factor (GEF) for RHOA, RAC1 and CDC42 GTPases. Regulates cell migration and adhesion assembly and disassembly through a RAC1, PI3K, RHOA and AKT1-dependent mechanism. Increases both RAC1 and CDC42 activity, but decreases the amount of active RHOA. Required for MMP9 up-regulation via the JNK signaling pathway in colorectal tumor cells. Involved in tumor angiogenesis and may play a role in intestinal adenoma formation and tumor progression. The chain is Spermatogenesis-associated protein 13 from Homo sapiens (Human).